The primary structure comprises 7763 residues: Nonribosomal peptide synthetase agiA (7763 aa).

The tract at residues 20–168 (APSVMQEEMI…DGWSARALLE (149 aa)) is condensation 1. Residues 469-866 (EQAASKWPSK…GRADGQIKLR (398 aa)) form an adenylation 1 region. The Carrier 1 domain occupies 995–1071 (LPESPAERLL…DVARAMSPSS (77 aa)). Ser1032 carries the O-(pantetheine 4'-phosphoryl)serine modification. The interval 1104–1526 (IYPCTPQQEG…GLSDQKLITG (423 aa)) is condensation 2. The tract at residues 1562 to 1968 (FEMQADMTPQ…GRIDSQIKLR (407 aa)) is adenylation 2. The 77-residue stretch at 2090 to 2166 (WEQGSIEDKI…SQAKCATSHT (77 aa)) folds into the Carrier 2 domain. Residue Ser2127 is modified to O-(pantetheine 4'-phosphoryl)serine. Positions 2212–2556 (DHFNQSVLLD…IMPLVFNYQG (345 aa)) are epimerase (E). The interval 2676 to 3016 (DIIPCTPMQR…PALVNTLLNF (341 aa)) is condensation 3. Positions 3136 to 3531 (WAAQVPEKVA…GRMDDQIKIR (396 aa)) are adenylation 3. Positions 3667–3743 (GPESPTEIML…ELATILNTSY (77 aa)) constitute a Carrier 3 domain. At Ser3704 the chain carries O-(pantetheine 4'-phosphoryl)serine. Residues 3789–4238 (VMPCTPFQEG…ISQSIDALVQ (450 aa)) form a condensation 4 region. The interval 4321–4687 (VGSQQPIIPI…GRFDRQIKIR (367 aa)) is adenylation 4. Residues 4806-4880 (APTTEREKVI…DLARQLESTA (75 aa)) enclose the Carrier 4 domain. Ser4840 is subject to O-(pantetheine 4'-phosphoryl)serine. The condensation 5 stretch occupies residues 4902–5339 (SFAQGRLWFL…ALLNDLSMHD (438 aa)). The adenylation 5 stretch occupies residues 5361 to 5765 (FRQEARSHPD…GRRDDQVKIR (405 aa)). Residues 5820–5975 (DAWKNVFDTE…YLSEIVQKLV (156 aa)) are S-adenosyl-L-methionine-dependent N-methyltransferase. The Carrier 5 domain occupies 6306–6381 (EYGSEMERIL…RLADRLLSKQ (76 aa)). Ser6341 carries the post-translational modification O-(pantetheine 4'-phosphoryl)serine. Residues 6378–6399 (LSKQSDSNTEANTSTDGKTQHS) form a disordered region. The span at 6379-6399 (SKQSDSNTEANTSTDGKTQHS) shows a compositional bias: polar residues. The condensation 6 stretch occupies residues 6424–6883 (MPCTPFQEGV…TVGDAEEAAL (460 aa)). The interval 6913-7327 (RQAMESPCKI…GRMDSQVKLR (415 aa)) is adenylation 6. Positions 7446–7522 (PSPGTLEATL…SQAFRILCDV (77 aa)) constitute a Carrier 6 domain. Ser7483 carries the O-(pantetheine 4'-phosphoryl)serine modification. Positions 7542 to 7638 (TMVLIHPFFG…TGKGSPFSTV (97 aa)) are thioesterase (TE).

Belongs to the NRP synthetase family.

Its function is as follows. Nonribosomal peptide synthetase; part of the gene cluster that mediates the biosynthesis of the aspergillicins A and F, 2 cryptic cyclic hexa-depsipeptides. The hexamodular NRPS agiA catalyzes the condensation of the six amino acid residues including N-Me-L-O-Me-tyrosine, L-proline 1, L-proline 2, D-isoleucine, O-acetyl-threonine, and L-isoleucine. The starting condensation domain (C1) of agiA probably loads acetyl-CoA which is condensed on the N-terminus of threonine by the first module to yield O-acetyl-threonine. The second module then loads L-isoleucine. The epimerase (E) domain on module 2 is probably involved in the formation of the D-isoleucine moiety. Modules 3 and 4 further load 2 successive L-prolines. Module 5 is then involved in the condensation of O-Me-L-tyrosine produced by the O-methyltransferase agiB and the N-methyl transferase (NMeT) domain on module 5 probably catalyzes the N-methylation to yield the N-Me-L-O-Me-tyrosine moiety. The A domain of module 5 loads preferentially O-Me-L-tyrosine, but it can also accept L-phenylalanine, which leads to the production of aspergillicin G. Module 6 then loads the last residue, L-isoleucine. The C-terminal thiolesterase (TE) domain probably cyclizes the peptide using the hydroxy group from threonine to form the cyclic depsipeptide. The polypeptide is Nonribosomal peptide synthetase agiA (Aspergillus flavus (strain ATCC 200026 / FGSC A1120 / IAM 13836 / NRRL 3357 / JCM 12722 / SRRC 167)).